Consider the following 231-residue polypeptide: Orotidine 5'-phosphate decarboxylase (231 aa).

Residues Asp11, Lys33, 60–69 (DLKLHDIPNT), Thr117, Arg179, Gln187, Gly207, and Arg208 contribute to the substrate site. Lys62 functions as the Proton donor in the catalytic mechanism.

This sequence belongs to the OMP decarboxylase family. Type 1 subfamily. In terms of assembly, homodimer.

It catalyses the reaction orotidine 5'-phosphate + H(+) = UMP + CO2. The protein operates within pyrimidine metabolism; UMP biosynthesis via de novo pathway; UMP from orotate: step 2/2. Its function is as follows. Catalyzes the decarboxylation of orotidine 5'-monophosphate (OMP) to uridine 5'-monophosphate (UMP). The protein is Orotidine 5'-phosphate decarboxylase of Ehrlichia chaffeensis (strain ATCC CRL-10679 / Arkansas).